The sequence spans 388 residues: Alanine racemase, catabolic (388 aa).

Lys46 (proton acceptor; specific for D-alanine) is an active-site residue. Lys46 is modified (N6-(pyridoxal phosphate)lysine). Arg145 contacts substrate. Tyr267 acts as the Proton acceptor; specific for L-alanine in catalysis. Residue Met315 coordinates substrate.

This sequence belongs to the alanine racemase family. Requires pyridoxal 5'-phosphate as cofactor.

The catalysed reaction is L-alanine = D-alanine. Isomerizes L-alanine to D-alanine which is then oxidized to pyruvate by DadA. The polypeptide is Alanine racemase, catabolic (dadB) (Agrobacterium fabrum (strain C58 / ATCC 33970) (Agrobacterium tumefaciens (strain C58))).